The sequence spans 358 residues: MENKLFSCIESRLRGKRNYYSRFYIGPFLKNQAFLYSNVLRRVLLSDSSNIVITAVNIVGAKHEYSLLPGVRESSLDLLLNLKELVFVKDIYTKFNKSYFAYLKSNGPKIIRCSDIILPNTIYAVDSTQYIATISNNKSLILKMKLTANLLNNFYSNLNYELNSLLSYYTNDILEKTNFSLIIDPNFSCVNKVNSSLISLDNLENYNDSISLEVWTNSSYSPRIIIQNSIKSMVNLFLSIYDTSFIDIKLENSDNFLENHLVSLSNRATFFKKSFFNICTEFNTVKYKTSFDKNLTLISIDELDLSIYSKFLLKRHNILTLYDLFKIDKRVLERFYNISYKTLQSIERKMVKYGTVNK.

Residues 1–244 are alpha N-terminal domain (alpha-NTD); sequence MENKLFSCIE…NLFLSIYDTS (244 aa). An alpha C-terminal domain (alpha-CTD) region spans residues 287–358; that stretch reads YKTSFDKNLT…KMVKYGTVNK (72 aa).

Belongs to the RNA polymerase alpha chain family. In terms of assembly, homodimer. The RNAP catalytic core consists of 2 alpha, 1 beta, 1 beta' and 1 omega subunit. When a sigma factor is associated with the core the holoenzyme is formed, which can initiate transcription.

It localises to the plastid. The protein localises to the chloroplast. It carries out the reaction RNA(n) + a ribonucleoside 5'-triphosphate = RNA(n+1) + diphosphate. Functionally, DNA-dependent RNA polymerase catalyzes the transcription of DNA into RNA using the four ribonucleoside triphosphates as substrates. The chain is DNA-directed RNA polymerase subunit alpha (rpoA) from Bigelowiella natans (Pedinomonas minutissima).